A 188-amino-acid chain; its full sequence is MCKKTHRIIDFRPQANWYWLFDHNRAILTLNMGDRVIDIVYKPEMLILKFDQPVFFTIEDVANYMDLFEGPALGDYWPALRSQIILHALVANQFHKPIMPKNWLFESSVGEQPRVHKGDHIILKSSAIKEAKKYFVLDNDENFILCMLIEKSHGLTFNRNFVQFQIVKVTYDKIFATKADCNTLSQYV.

The protein belongs to the ZapC family. In terms of assembly, interacts directly with FtsZ.

It localises to the cytoplasm. In terms of biological role, contributes to the efficiency of the cell division process by stabilizing the polymeric form of the cell division protein FtsZ. Acts by promoting interactions between FtsZ protofilaments and suppressing the GTPase activity of FtsZ. In Psychromonas ingrahamii (strain DSM 17664 / CCUG 51855 / 37), this protein is Cell division protein ZapC.